Here is a 179-residue protein sequence, read N- to C-terminus: Adenine phosphoribosyltransferase (179 aa).

Belongs to the purine/pyrimidine phosphoribosyltransferase family. In terms of assembly, homodimer.

It is found in the cytoplasm. It catalyses the reaction AMP + diphosphate = 5-phospho-alpha-D-ribose 1-diphosphate + adenine. It functions in the pathway purine metabolism; AMP biosynthesis via salvage pathway; AMP from adenine: step 1/1. Catalyzes a salvage reaction resulting in the formation of AMP, that is energically less costly than de novo synthesis. The sequence is that of Adenine phosphoribosyltransferase from Beijerinckia indica subsp. indica (strain ATCC 9039 / DSM 1715 / NCIMB 8712).